The chain runs to 237 residues: Sugar fermentation stimulation protein homolog (237 aa).

This sequence belongs to the SfsA family.

The protein is Sugar fermentation stimulation protein homolog of Thioalkalivibrio sulfidiphilus (strain HL-EbGR7).